A 192-amino-acid chain; its full sequence is Cytidylate kinase (192 aa).

7–15 (GPPGSGKST) contributes to the ATP binding site.

Belongs to the cytidylate kinase family. Type 2 subfamily.

Its subcellular location is the cytoplasm. It catalyses the reaction CMP + ATP = CDP + ADP. It carries out the reaction dCMP + ATP = dCDP + ADP. The sequence is that of Cytidylate kinase from Halobacterium salinarum (strain ATCC 29341 / DSM 671 / R1).